A 673-amino-acid polypeptide reads, in one-letter code: DNA ligase (673 aa).

Residues 32 to 36 (DHVYD), 81 to 82 (SL), and Glu111 contribute to the NAD(+) site. Lys113 serves as the catalytic N6-AMP-lysine intermediate. NAD(+) is bound by residues Arg134, Glu171, Lys286, and Lys310. Zn(2+) is bound by residues Cys404, Cys407, Cys422, and Cys428. Residues 595–673 (NIIDEYKNKT…NEFWKKDNNF (79 aa)) enclose the BRCT domain.

This sequence belongs to the NAD-dependent DNA ligase family. LigA subfamily. Requires Mg(2+) as cofactor. The cofactor is Mn(2+).

It carries out the reaction NAD(+) + (deoxyribonucleotide)n-3'-hydroxyl + 5'-phospho-(deoxyribonucleotide)m = (deoxyribonucleotide)n+m + AMP + beta-nicotinamide D-nucleotide.. DNA ligase that catalyzes the formation of phosphodiester linkages between 5'-phosphoryl and 3'-hydroxyl groups in double-stranded DNA using NAD as a coenzyme and as the energy source for the reaction. It is essential for DNA replication and repair of damaged DNA. This is DNA ligase from Ureaplasma parvum serovar 3 (strain ATCC 27815 / 27 / NCTC 11736).